A 502-amino-acid polypeptide reads, in one-letter code: Glycerol kinase (502 aa).

An ADP-binding site is contributed by Thr-14. ATP-binding residues include Thr-14, Thr-15, and Ser-16. Thr-14 lines the sn-glycerol 3-phosphate pocket. Arg-18 is an ADP binding site. Positions 84, 85, and 136 each coordinate sn-glycerol 3-phosphate. The glycerol site is built by Arg-84, Glu-85, and Tyr-136. His-232 is subject to Phosphohistidine; by HPr. Sn-glycerol 3-phosphate is bound at residue Asp-246. Glycerol is bound by residues Asp-246 and Gln-247. The ADP site is built by Thr-268 and Gly-311. The ATP site is built by Thr-268, Gly-311, Gln-315, and Gly-412. Positions 412 and 416 each coordinate ADP.

Belongs to the FGGY kinase family. As to quaternary structure, homotetramer and homodimer (in equilibrium). In terms of processing, the phosphoenolpyruvate-dependent sugar phosphotransferase system (PTS), including enzyme I, and histidine-containing protein (HPr) are required for the phosphorylation, which leads to the activation of the enzyme.

It catalyses the reaction glycerol + ATP = sn-glycerol 3-phosphate + ADP + H(+). It participates in polyol metabolism; glycerol degradation via glycerol kinase pathway; sn-glycerol 3-phosphate from glycerol: step 1/1. With respect to regulation, activated by phosphorylation and inhibited by fructose 1,6-bisphosphate (FBP). Functionally, key enzyme in the regulation of glycerol uptake and metabolism. Catalyzes the phosphorylation of glycerol to yield sn-glycerol 3-phosphate. This is Glycerol kinase from Streptococcus pneumoniae (strain Hungary19A-6).